Here is a 122-residue protein sequence, read N- to C-terminus: UPF0382 membrane protein SAUSA300_0565 (122 aa).

4 helical membrane passes run Leu3–Ala23, Met46–Val66, Ala69–Leu89, and Ile98–Phe118.

The protein belongs to the UPF0382 family.

It is found in the cell membrane. This Staphylococcus aureus (strain USA300) protein is UPF0382 membrane protein SAUSA300_0565.